The following is a 359-amino-acid chain: Chorismate synthase (359 aa).

Arg47 contacts NADP(+). Residues 123–125 (RSS), Gly283, 298–302 (KPTSS), and Arg326 contribute to the FMN site.

The protein belongs to the chorismate synthase family. Homotetramer. It depends on FMNH2 as a cofactor.

The catalysed reaction is 5-O-(1-carboxyvinyl)-3-phosphoshikimate = chorismate + phosphate. It participates in metabolic intermediate biosynthesis; chorismate biosynthesis; chorismate from D-erythrose 4-phosphate and phosphoenolpyruvate: step 7/7. Functionally, catalyzes the anti-1,4-elimination of the C-3 phosphate and the C-6 proR hydrogen from 5-enolpyruvylshikimate-3-phosphate (EPSP) to yield chorismate, which is the branch point compound that serves as the starting substrate for the three terminal pathways of aromatic amino acid biosynthesis. This reaction introduces a second double bond into the aromatic ring system. This is Chorismate synthase from Chlamydia abortus (strain DSM 27085 / S26/3) (Chlamydophila abortus).